A 465-amino-acid chain; its full sequence is Iron transporter FTH1 (465 aa).

Residues 1-11 (MAFEDYFSFQI) lie on the Vacuolar side of the membrane. The helical transmembrane segment at 12–32 (FFIFLRESLEIVVIVSILLTI) threads the bilayer. Residues 33 to 135 (VKQGLSVEDD…LYQKLKIQIL (103 aa)) lie on the Cytoplasmic side of the membrane. The disordered stretch occupies residues 44-66 (PFEGSSSSAGLPSPNTNTNADST). Over residues 46 to 66 (EGSSSSAGLPSPNTNTNADST) the composition is skewed to polar residues. Residues 136-156 (AGGAFGLLLCMLIGGAFVSIF) traverse the membrane as a helical segment. Over 157–170 (YHIGTDLWTLSEHY) the chain is Vacuolar. The chain crosses the membrane as a helical span at residues 171–191 (YEGVLSLVASVIISVMGLFFL). Residues 192-289 (RMGKLREKFR…FFFRYSSSLS (98 aa)) lie on the Cytoplasmic side of the membrane. The helical transmembrane segment at 290-310 (LKICLVVATCFLYLIAAGLFS) threads the bilayer. The Vacuolar portion of the chain corresponds to 311 to 358 (KGVWQLELQDYVNKCNGQDMSEVGNGPGSYDISRSVWHVNCCNGEKDG). The chain crosses the membrane as a helical span at residues 359 to 379 (GWMIFTAIFGWTNSATVGSVI). Topologically, residues 380–465 (SYNAYWLVLI…LIIDSSGSAN (86 aa)) are cytoplasmic. Residues 433–465 (TSELNSSTSEPDSQRRSKDSSVPLIIDSSGSAN) form a disordered region. Ser-449 and Ser-453 each carry phosphoserine.

It belongs to the oxidase-dependent Fe transporter (OFeT) (TC 9.A.10.1) family. Interacts with FET5.

Its subcellular location is the vacuole membrane. Functionally, high affinity iron transporter probably involved in transport of intravacuolar stores of iron. This chain is Iron transporter FTH1 (FTH1), found in Saccharomyces cerevisiae (strain ATCC 204508 / S288c) (Baker's yeast).